The primary structure comprises 1359 residues: ABC transporter C family member 1 (1359 aa).

In terms of domain architecture, ABC transmembrane type-1 1 spans 111-394; it reads NKLTIFLQIL…LPNSIQQLQS (284 aa). 6 helical membrane-spanning segments follow: residues 119–139, 147–167, 214–234, 244–264, 332–352, and 363–383; these read ILTN…IQFI, SFLA…SYTF, LLSV…MGIF, LALL…IMVI, MIFW…VLVL, and ITLE…IPLL. Positions 409 to 478 are disordered; the sequence is PEIQQNHSSN…QQQQQQQQQQ (70 aa). Acidic residues predominate over residues 420 to 433; the sequence is EEEEEDEYDDDINS. Residues 440–450 are compositionally biased toward polar residues; it reads HNGSFNWNQVD. Residues 459-478 are compositionally biased toward low complexity; the sequence is GNQQQQQQQQQQQQQQQQQQ. The ABC transporter 1 domain occupies 470 to 690; the sequence is QQQQQQQQQQ…IDFESIMKTK (221 aa). Position 502 to 509 (502 to 509) interacts with ATP; it reads GVVGSGKT. One can recognise an ABC transmembrane type-1 2 domain in the interval 763 to 1061; that stretch reads LRVYKEYFKH…LEVKMNSVER (299 aa). Helical transmembrane passes span 773-793, 819-839, 884-904, 906-926, and 999-1021; these read GSSI…QIIY, IYLL…FMMA, VDLL…TVLV, IGIM…LIGI, and WVAV…FSLF. Residues 1073-1102 adopt a coiled-coil conformation; that stretch reads NSKINFFRNEQQEEEEEEEEEFDFDNDDYD. The 235-residue stretch at 1116 to 1350 folds into the ABC transporter 2 domain; that stretch reads IEFRNVEIKY…QESRFSKLVK (235 aa). ATP is bound at residue 1150–1157; that stretch reads GRTGAGKS.

The protein belongs to the ABC transporter superfamily. ABCC family. Conjugate transporter (TC 3.A.1.208) subfamily.

It localises to the membrane. This is ABC transporter C family member 1 (abcC1) from Dictyostelium discoideum (Social amoeba).